The following is a 366-amino-acid chain: Transmembrane protein 26 (366 aa).

3 consecutive transmembrane segments (helical) span residues L4–V24, Y36–F56, and W64–E84. N-linked (GlcNAc...) asparagine glycosylation is present at N110. The next 5 helical transmembrane spans lie at M138 to I158, E176 to L196, V208 to V228, I258 to I278, and V282 to F302. Over residues H319–G329 the composition is skewed to basic and acidic residues. The tract at residues H319–P366 is disordered. Over residues S354–P366 the composition is skewed to polar residues.

It is found in the membrane. This Mus musculus (Mouse) protein is Transmembrane protein 26 (Tmem26).